Here is a 450-residue protein sequence, read N- to C-terminus: 3-phosphoshikimate 1-carboxyvinyltransferase (450 aa).

Residues 1 to 26 (MSGHGTPIPMTSRRASPLKGEAHVPG) are disordered. 3-phosphoshikimate contacts are provided by Lys-28, Ser-29, and Arg-33. Lys-28 is a binding site for phosphoenolpyruvate. Residues Gly-101 and Arg-129 each contribute to the phosphoenolpyruvate site. The 3-phosphoshikimate site is built by Ser-174, Gln-176, Asp-327, and Lys-354. A phosphoenolpyruvate-binding site is contributed by Gln-176. Asp-327 functions as the Proton acceptor in the catalytic mechanism. Phosphoenolpyruvate contacts are provided by Arg-358 and Arg-403.

It belongs to the EPSP synthase family. As to quaternary structure, monomer.

The protein localises to the cytoplasm. The enzyme catalyses 3-phosphoshikimate + phosphoenolpyruvate = 5-O-(1-carboxyvinyl)-3-phosphoshikimate + phosphate. It functions in the pathway metabolic intermediate biosynthesis; chorismate biosynthesis; chorismate from D-erythrose 4-phosphate and phosphoenolpyruvate: step 6/7. In terms of biological role, catalyzes the transfer of the enolpyruvyl moiety of phosphoenolpyruvate (PEP) to the 5-hydroxyl of shikimate-3-phosphate (S3P) to produce enolpyruvyl shikimate-3-phosphate and inorganic phosphate. The protein is 3-phosphoshikimate 1-carboxyvinyltransferase of Ruegeria sp. (strain TM1040) (Silicibacter sp.).